The primary structure comprises 506 residues: Lysine--tRNA ligase (506 aa).

Mg(2+) contacts are provided by Glu411 and Glu418.

Belongs to the class-II aminoacyl-tRNA synthetase family. As to quaternary structure, homodimer. Mg(2+) is required as a cofactor.

It is found in the cytoplasm. The enzyme catalyses tRNA(Lys) + L-lysine + ATP = L-lysyl-tRNA(Lys) + AMP + diphosphate. The protein is Lysine--tRNA ligase of Thermosynechococcus vestitus (strain NIES-2133 / IAM M-273 / BP-1).